We begin with the raw amino-acid sequence, 201 residues long: MDKFVKLTGVAAPLPVVNIDTDMIIPKDYLKTIKRTGLGTGLFAEARYNEDGTPNPDFVLNKPAYQNAKILVAGDNFGCGSSREHAPWALLDFGIRCVISTSFADIFYNNCFKNGILPIVVSQADLDKLMDDANRGSNAVLSIDLEAQEITGPDGGSIKFEIDAFKRHCLLNGLDDIGLTLEKAGAIDTFEKSTAASRPWA.

Belongs to the LeuD family. LeuD type 1 subfamily. Heterodimer of LeuC and LeuD.

It catalyses the reaction (2R,3S)-3-isopropylmalate = (2S)-2-isopropylmalate. Its pathway is amino-acid biosynthesis; L-leucine biosynthesis; L-leucine from 3-methyl-2-oxobutanoate: step 2/4. Its function is as follows. Catalyzes the isomerization between 2-isopropylmalate and 3-isopropylmalate, via the formation of 2-isopropylmaleate. The chain is 3-isopropylmalate dehydratase small subunit from Sinorhizobium fredii (strain NBRC 101917 / NGR234).